A 307-amino-acid polypeptide reads, in one-letter code: tRNA dimethylallyltransferase (307 aa).

Glycine 9–threonine 16 serves as a coordination point for ATP. Residue threonine 11–threonine 16 coordinates substrate. The tract at residues aspartate 34 to glutamine 37 is interaction with substrate tRNA.

Belongs to the IPP transferase family. Monomer. Mg(2+) is required as a cofactor.

It catalyses the reaction adenosine(37) in tRNA + dimethylallyl diphosphate = N(6)-dimethylallyladenosine(37) in tRNA + diphosphate. Functionally, catalyzes the transfer of a dimethylallyl group onto the adenine at position 37 in tRNAs that read codons beginning with uridine, leading to the formation of N6-(dimethylallyl)adenosine (i(6)A). The sequence is that of tRNA dimethylallyltransferase from Levilactobacillus brevis (strain ATCC 367 / BCRC 12310 / CIP 105137 / JCM 1170 / LMG 11437 / NCIMB 947 / NCTC 947) (Lactobacillus brevis).